A 137-amino-acid polypeptide reads, in one-letter code: NADH-ubiquinone oxidoreductase chain 3 (137 aa).

A run of 3 helical transmembrane segments spans residues 6-26 (LFIL…LIFA), 57-77 (FFIF…TFPF), and 86-106 (IYGL…FVYE).

Belongs to the complex I subunit 3 family.

The protein localises to the mitochondrion membrane. The enzyme catalyses a ubiquinone + NADH + 5 H(+)(in) = a ubiquinol + NAD(+) + 4 H(+)(out). Functionally, core subunit of the mitochondrial membrane respiratory chain NADH dehydrogenase (Complex I) that is believed to belong to the minimal assembly required for catalysis. Complex I functions in the transfer of electrons from NADH to the respiratory chain. The immediate electron acceptor for the enzyme is believed to be ubiquinone. This chain is NADH-ubiquinone oxidoreductase chain 3 (ND3), found in Podospora anserina (strain S / ATCC MYA-4624 / DSM 980 / FGSC 10383) (Pleurage anserina).